Consider the following 354-residue polypeptide: Methylthioribose-1-phosphate isomerase (354 aa).

Substrate is bound by residues 48-50, R95, and Q202; that span reads RGA. D243 (proton donor) is an active-site residue. 253–254 contacts substrate; that stretch reads NK.

It belongs to the eIF-2B alpha/beta/delta subunits family. MtnA subfamily.

It carries out the reaction 5-(methylsulfanyl)-alpha-D-ribose 1-phosphate = 5-(methylsulfanyl)-D-ribulose 1-phosphate. It functions in the pathway amino-acid biosynthesis; L-methionine biosynthesis via salvage pathway; L-methionine from S-methyl-5-thio-alpha-D-ribose 1-phosphate: step 1/6. In terms of biological role, catalyzes the interconversion of methylthioribose-1-phosphate (MTR-1-P) into methylthioribulose-1-phosphate (MTRu-1-P). This is Methylthioribose-1-phosphate isomerase from Roseiflexus castenholzii (strain DSM 13941 / HLO8).